The primary structure comprises 1404 residues: DNA-directed RNA polymerase subunit beta' (1404 aa).

Zn(2+) contacts are provided by Cys-70, Cys-72, Cys-85, and Cys-88. Asp-460, Asp-462, and Asp-464 together coordinate Mg(2+). The Zn(2+) site is built by Cys-814, Cys-889, Cys-896, and Cys-899.

This sequence belongs to the RNA polymerase beta' chain family. In terms of assembly, the RNAP catalytic core consists of 2 alpha, 1 beta, 1 beta' and 1 omega subunit. When a sigma factor is associated with the core the holoenzyme is formed, which can initiate transcription. Mg(2+) is required as a cofactor. It depends on Zn(2+) as a cofactor.

It catalyses the reaction RNA(n) + a ribonucleoside 5'-triphosphate = RNA(n+1) + diphosphate. In terms of biological role, DNA-dependent RNA polymerase catalyzes the transcription of DNA into RNA using the four ribonucleoside triphosphates as substrates. The sequence is that of DNA-directed RNA polymerase subunit beta' from Xanthomonas axonopodis pv. citri (strain 306).